Consider the following 245-residue polypeptide: tRNA pseudouridine synthase A (245 aa).

D52 functions as the Nucleophile in the catalytic mechanism. Y110 is a substrate binding site.

It belongs to the tRNA pseudouridine synthase TruA family. In terms of assembly, homodimer.

The catalysed reaction is uridine(38/39/40) in tRNA = pseudouridine(38/39/40) in tRNA. Its function is as follows. Formation of pseudouridine at positions 38, 39 and 40 in the anticodon stem and loop of transfer RNAs. This is tRNA pseudouridine synthase A from Pseudothermotoga lettingae (strain ATCC BAA-301 / DSM 14385 / NBRC 107922 / TMO) (Thermotoga lettingae).